A 101-amino-acid chain; its full sequence is Small ribosomal subunit protein uS14 (101 aa).

It belongs to the universal ribosomal protein uS14 family. Part of the 30S ribosomal subunit. Contacts proteins S3 and S10.

Functionally, binds 16S rRNA, required for the assembly of 30S particles and may also be responsible for determining the conformation of the 16S rRNA at the A site. This chain is Small ribosomal subunit protein uS14, found in Polynucleobacter necessarius subsp. necessarius (strain STIR1).